A 244-amino-acid chain; its full sequence is Glutathione S-transferase theta-2B (244 aa).

In terms of domain architecture, GST N-terminal spans 2–82 (GLELFLDLVS…YLSCKYQTPD (81 aa)). Glutathione is bound by residues 40-41 (HK), 53-54 (KL), 66-67 (ES), and 104-107 (DCIR). Residues 88–224 (DLQARARVHE…SILEQAAKKT (137 aa)) form the GST C-terminal domain.

This sequence belongs to the GST superfamily. Theta family. Homodimer. As to expression, expressed at low levels in liver. In lung, expressed at low levels in ciliated bronchiolar cells, alveolar macrophages and alveolar type II cells.

The protein resides in the cytoplasm. It localises to the cytosol. The enzyme catalyses RX + glutathione = an S-substituted glutathione + a halide anion + H(+). In terms of biological role, conjugation of reduced glutathione to a wide number of exogenous and endogenous hydrophobic electrophiles. Has a sulfatase activity. The chain is Glutathione S-transferase theta-2B (GSTT2B) from Homo sapiens (Human).